Reading from the N-terminus, the 2185-residue chain is DNA polymerase epsilon catalytic subunit A (2185 aa).

4 residues coordinate Zn(2+): Cys2072, Cys2075, Cys2094, and Cys2097. The CysA-type zinc finger occupies 2072–2097 (CEHCSYISDIDICRESMERVFICQSC). [4Fe-4S] cluster-binding residues include Cys2128, Cys2131, Cys2143, and Cys2145. The short motif at 2128-2145 (CNKCHKIKEDAMSPYCPC) is the CysB motif element.

Belongs to the DNA polymerase type-B family. In terms of assembly, heterotetramer. Consists of 4 subunits: POL2, DPB2, DPB3 and DPB4. [4Fe-4S] cluster is required as a cofactor.

The protein localises to the nucleus. It catalyses the reaction DNA(n) + a 2'-deoxyribonucleoside 5'-triphosphate = DNA(n+1) + diphosphate. Functionally, DNA polymerase II participates in chromosomal DNA replication. The polypeptide is DNA polymerase epsilon catalytic subunit A (POL2) (Kluyveromyces lactis (strain ATCC 8585 / CBS 2359 / DSM 70799 / NBRC 1267 / NRRL Y-1140 / WM37) (Yeast)).